Reading from the N-terminus, the 141-residue chain is 3-hydroxyacyl-[acyl-carrier-protein] dehydratase FabZ (141 aa).

Residue H48 is part of the active site.

Belongs to the thioester dehydratase family. FabZ subfamily.

Its subcellular location is the cytoplasm. The enzyme catalyses a (3R)-hydroxyacyl-[ACP] = a (2E)-enoyl-[ACP] + H2O. Functionally, involved in unsaturated fatty acids biosynthesis. Catalyzes the dehydration of short chain beta-hydroxyacyl-ACPs and long chain saturated and unsaturated beta-hydroxyacyl-ACPs. This is 3-hydroxyacyl-[acyl-carrier-protein] dehydratase FabZ from Bacillus velezensis (strain DSM 23117 / BGSC 10A6 / LMG 26770 / FZB42) (Bacillus amyloliquefaciens subsp. plantarum).